We begin with the raw amino-acid sequence, 201 residues long: Regulator of G-protein signaling 1 (201 aa).

The 117-residue stretch at 75-191 (SLEKLLISED…LKSEIFLRLA (117 aa)) folds into the RGS domain.

The protein localises to the cell membrane. It localises to the cytoplasm. The protein resides in the cytosol. In terms of biological role, regulates G protein-coupled receptor signaling cascades, including signaling downstream of the N-formylpeptide chemoattractant receptors and leukotriene receptors. Inhibits B cell chemotaxis. Inhibits signal transduction by increasing the GTPase activity of G protein alpha subunits, thereby driving them into their inactive GDP-bound form. The chain is Regulator of G-protein signaling 1 (rgs1) from Xenopus tropicalis (Western clawed frog).